An 82-amino-acid chain; its full sequence is Small ribosomal subunit protein uS17 (82 aa).

It belongs to the universal ribosomal protein uS17 family. As to quaternary structure, part of the 30S ribosomal subunit.

Functionally, one of the primary rRNA binding proteins, it binds specifically to the 5'-end of 16S ribosomal RNA. This chain is Small ribosomal subunit protein uS17, found in Shewanella woodyi (strain ATCC 51908 / MS32).